The sequence spans 506 residues: Secreted RxLR effector protein 134 (506 aa).

A signal peptide spans 1–19; sequence MQGAYCVAVALLIAASGQA. Positions 50 to 71 match the RxLR-dEER motif; it reads RVLQVSHYPKDDLMLLAGNEER.

This sequence belongs to the RxLR effector family.

It localises to the secreted. The protein resides in the host nucleus. Secreted effector that completely suppresses the host cell death induced by cell death-inducing proteins. The polypeptide is Secreted RxLR effector protein 134 (Plasmopara viticola (Downy mildew of grapevine)).